Here is a 439-residue protein sequence, read N- to C-terminus: MVYLRYFKGLILSDAYAPGLKWSDELKAYSALAFKYRDVRKYFLEKEIEVEENVIDSLPFPLIKDKIELRDYQAEAVKAWLKEKRGIIVLPTGAGKTQVALKIVSIMKVATLIVVPTIDLITQWKERINKYLDFDPGIIGGGEDSLKGITVITYDSAYTRAEELGNKFPLLIFDEVHHLPSEGYSIMAQLFASPYRLGLTATPERDDGKHELYPILVGPIVYRKSVEELAGKYIAKYKIKKLYVSLTNEEKKRYDGLRKKLKDFLSSRGLKLQNLDDFHRLVKLAAKDKEAREALLAWHESLNIAVNSQSKIEKLREILQEYKNEKIIVFTRDTQMAYRISKTFLIPVVTYKTDKDEREEILQKFRDGEYRVIVASTVFDEGVDVPDATLAIVMGGYGTKRQFLQRLGRILRKKDKEALLIEIVTKGTADYRLSRRRRE.

Positions M1–V54 are DRD domain. Residues V77–V221 form the Helicase ATP-binding domain. ATP-binding positions include L90–T97 and R127. A DEAH box motif is present at residues D174–H177. Positions R205 to D207 match the RED motif motif. Residues E227 to I234 are flexible hinge region. Positions N248 to N307 are thM region. Residues K311–E439 enclose the Helicase C-terminal domain.

The protein belongs to the helicase family. RAD25/XPB subfamily. Forms a heterodimer with Bax1.

It carries out the reaction Couples ATP hydrolysis with the unwinding of duplex DNA by translocating in the 3'-5' direction.. The enzyme catalyses ATP + H2O = ADP + phosphate + H(+). Its function is as follows. ATP-dependent DNA translocase which moves along double-stranded DNA (dsDNA) in a 3'-5' direction, unwinding the DNA. The ThM domain grips the resulting 3'-ssDNA tail and functions as a wedge (particularly Phe-278), breaking dsDNA base pairs, probably using the energy from ATP hydrolysis to move along dsDNA. A DNA-dependent ATPase; double-stranded DNA (dsDNA) stimulates the activity more than single-stranded DNA (ssDNA), while Bax1 stimulates ATPase more. In an in vitro assay had no detectable helicase activity. Binds ssDNA better than dsDNA. Has very low ATPase activity that is stimulated by Bax1; dsDNA, Y-form DNA and a DNA substrate with a 6 base pair (bp) bubble in the center stimulate the XPB2-Bax1 ATPase activity about 10- 20-fold more than the absence of DNA. In an XPB2-Bax1-bubble DNA crystal (12 bp of dsDNA, a 6 base bubble and 6 bp of dsDNA) the short 6 bp arm is unwound. The 2 helicase and the ThM domains of XPB2 with the NTD and CRD domains of Bax1 encircle the DNA, forming a tunnel where the 12 bp dsDNA and the ds-ssDNA junction are located. The ThM domain is wedged between the ssDNA tails, with the 5' ssDNA contacting Bax1 and the 3' ssDNA in a channel in XPB2. Bax1 increases the affinity of XPB2 for forked DNA. The polypeptide is DNA 3'-5' translocase XPB2 (Sulfurisphaera tokodaii (strain DSM 16993 / JCM 10545 / NBRC 100140 / 7) (Sulfolobus tokodaii)).